Here is a 353-residue protein sequence, read N- to C-terminus: tRNA-cytidine(32) 2-sulfurtransferase (353 aa).

Positions 49–54 (SGGKDS) match the PP-loop motif motif. Residues Cys-124, Cys-127, and Cys-215 each contribute to the [4Fe-4S] cluster site.

This sequence belongs to the TtcA family. In terms of assembly, homodimer. Requires Mg(2+) as cofactor. [4Fe-4S] cluster serves as cofactor.

It is found in the cytoplasm. The catalysed reaction is cytidine(32) in tRNA + S-sulfanyl-L-cysteinyl-[cysteine desulfurase] + AH2 + ATP = 2-thiocytidine(32) in tRNA + L-cysteinyl-[cysteine desulfurase] + A + AMP + diphosphate + H(+). Its pathway is tRNA modification. In terms of biological role, catalyzes the ATP-dependent 2-thiolation of cytidine in position 32 of tRNA, to form 2-thiocytidine (s(2)C32). The sulfur atoms are provided by the cysteine/cysteine desulfurase (IscS) system. The chain is tRNA-cytidine(32) 2-sulfurtransferase from Sodalis glossinidius (strain morsitans).